The sequence spans 471 residues: Eukaryotic translation initiation factor 3 subunit M (471 aa).

The tract at residues 39–61 (EISSLLEPLRQQEQSEEEPDRKQ) is disordered. Residues 206–377 (DFELAQSHVV…SEFLVHRATY (172 aa)) form the PCI domain. Positions 419-471 (QAATEEANQGKSGEKGGKGGDRRRNPQHQQQQQQSQPSQPQQPRETELVAGAE) are disordered. Over residues 430–442 (SGEKGGKGGDRRR) the composition is skewed to basic and acidic residues. A compositionally biased stretch (low complexity) spans 445–461 (QHQQQQQQSQPSQPQQP).

It belongs to the eIF-3 subunit M family. As to quaternary structure, component of the eukaryotic translation initiation factor 3 (eIF-3) complex.

The protein localises to the cytoplasm. Component of the eukaryotic translation initiation factor 3 (eIF-3) complex, which is involved in protein synthesis of a specialized repertoire of mRNAs and, together with other initiation factors, stimulates binding of mRNA and methionyl-tRNAi to the 40S ribosome. The eIF-3 complex specifically targets and initiates translation of a subset of mRNAs involved in cell proliferation. The chain is Eukaryotic translation initiation factor 3 subunit M from Aspergillus clavatus (strain ATCC 1007 / CBS 513.65 / DSM 816 / NCTC 3887 / NRRL 1 / QM 1276 / 107).